Reading from the N-terminus, the 88-residue chain is Large ribosomal subunit protein bL31B (88 aa).

Belongs to the bacterial ribosomal protein bL31 family. Type B subfamily. As to quaternary structure, part of the 50S ribosomal subunit.

This Bordetella bronchiseptica (strain ATCC BAA-588 / NCTC 13252 / RB50) (Alcaligenes bronchisepticus) protein is Large ribosomal subunit protein bL31B.